Reading from the N-terminus, the 539-residue chain is Chaperonin GroEL 1 (539 aa).

Residues 29 to 32 (TLGP), 86 to 90 (DGTTT), Gly-413, 478 to 480 (NAA), and Asp-494 contribute to the ATP site. The segment at 520–539 (IVDKPAEPEDDGHGHHGHAH) is disordered. Basic and acidic residues predominate over residues 523–533 (KPAEPEDDGHG).

This sequence belongs to the chaperonin (HSP60) family. As to quaternary structure, forms a cylinder of 14 subunits composed of two heptameric rings stacked back-to-back. Interacts with the co-chaperonin GroES.

Its subcellular location is the cytoplasm. It carries out the reaction ATP + H2O + a folded polypeptide = ADP + phosphate + an unfolded polypeptide.. Together with its co-chaperonin GroES, plays an essential role in assisting protein folding. The GroEL-GroES system forms a nano-cage that allows encapsulation of the non-native substrate proteins and provides a physical environment optimized to promote and accelerate protein folding. This Mycobacterium ulcerans (strain Agy99) protein is Chaperonin GroEL 1.